Here is a 398-residue protein sequence, read N- to C-terminus: Transposase for insertion sequence element ISRM5 (398 aa).

Belongs to the transposase mutator family.

Required for the transposition of the insertion element. The polypeptide is Transposase for insertion sequence element ISRM5 (Rhizobium meliloti (strain 1021) (Ensifer meliloti)).